A 267-amino-acid polypeptide reads, in one-letter code: MNPGRLGLAPLLQENPLWISWHDSNWIPVLNPGNVMDYFSEKSNPFYDRTCNNEIVRMQRQSLELLNNMTGVEYIPLHVQDPILYVIRKQHRHSPTEATPMADYYIIAGTVYQAPDLASVFNSRILSTVHHLQTAFDEASSYSRYHPSKGYSWDFSSNKAIAEKTKTQTKKEAPVKEEPSSIFQRQRVDMLLGDLLRKFPLPLPQMTNNPTGGNPSDTANASNNHGGAAGDSDHVGADATLIKQEPTEGGVGRAGNNDVPPEKKMKL.

The interval 202-267 is disordered; it reads PLPQMTNNPT…DVPPEKKMKL (66 aa). Positions 205-218 are enriched in polar residues; that stretch reads QMTNNPTGGNPSDT.

Belongs to the Mediator complex subunit 6 family. Component of the Mediator complex.

It localises to the nucleus. Component of the Mediator complex, a coactivator involved in the regulated transcription of nearly all RNA polymerase II-dependent genes. Mediator functions as a bridge to convey information from gene-specific regulatory proteins to the basal RNA polymerase II transcription machinery. Mediator is recruited to promoters by direct interactions with regulatory proteins and serves as a scaffold for the assembly of a functional preinitiation complex with RNA polymerase II and the general transcription factors. The protein is Mediator of RNA polymerase II transcription subunit 6 (MED6) of Anopheles gambiae (African malaria mosquito).